We begin with the raw amino-acid sequence, 546 residues long: 2-isopropylmalate synthase (546 aa).

In terms of domain architecture, Pyruvate carboxyltransferase spans 8–271 (ILIFDTTLRD…NSFFGRSSDS (264 aa)). Asp17, His208, His210, and Asn244 together coordinate Mn(2+). The segment at 408–546 (QLSHVQVSCG…KNKVLSNPKK (139 aa)) is regulatory domain.

This sequence belongs to the alpha-IPM synthase/homocitrate synthase family. LeuA type 1 subfamily. As to quaternary structure, homodimer. The cofactor is Mn(2+).

It is found in the cytoplasm. The enzyme catalyses 3-methyl-2-oxobutanoate + acetyl-CoA + H2O = (2S)-2-isopropylmalate + CoA + H(+). The protein operates within amino-acid biosynthesis; L-leucine biosynthesis; L-leucine from 3-methyl-2-oxobutanoate: step 1/4. Functionally, catalyzes the condensation of the acetyl group of acetyl-CoA with 3-methyl-2-oxobutanoate (2-ketoisovalerate) to form 3-carboxy-3-hydroxy-4-methylpentanoate (2-isopropylmalate). In Prochlorococcus marinus subsp. pastoris (strain CCMP1986 / NIES-2087 / MED4), this protein is 2-isopropylmalate synthase.